Here is a 292-residue protein sequence, read N- to C-terminus: Glycine--tRNA ligase alpha subunit (292 aa).

This sequence belongs to the class-II aminoacyl-tRNA synthetase family. As to quaternary structure, tetramer of two alpha and two beta subunits.

It is found in the cytoplasm. The enzyme catalyses tRNA(Gly) + glycine + ATP = glycyl-tRNA(Gly) + AMP + diphosphate. This is Glycine--tRNA ligase alpha subunit from Desulfovibrio desulfuricans (strain ATCC 27774 / DSM 6949 / MB).